The chain runs to 172 residues: MIIYKDTVTEDEMFSDIYKIAETPDGMCFEVEGKIIQRVEGAIDDALIGGNASAECQEEDIGGATTVSGVDIVINHKLQETGFTKDSYKNYIKDYVKLVKAKLEETDPDRVKPFMKGIQDRVKLILGNFKNYQFYTGERMNPDGMVALLDYREDGVTPFMIFFKDGLISEKC.

Residues 1–172 (MIIYKDTVTE…FKDGLISEKC (172 aa)) enclose the TCTP domain.

It belongs to the TCTP family.

It is found in the cytoplasm. Functionally, involved in calcium binding and microtubule stabilization. In Xenopus tropicalis (Western clawed frog), this protein is Translationally-controlled tumor protein homolog (tpt1).